The following is a 152-amino-acid chain: MASLEDGTYRLRAVTTSNPDPGVGGEYATVEGARQPVKAEPSTPPFFERQIWQVTRNADGQYTIKYQGLNAPFEYGFSYDQLEQNAPVIAGDPKEYILQLVPSTTDVYIIRAPIQRVGVDVEVGVQGNNLVYKFFPVDGSGGDRPAWRFTRE.

This sequence belongs to the protease inhibitor I48 family. As to quaternary structure, homodimer.

Its function is as follows. Binds and inhibits cysteine proteinases. Inhibits most strongly papain and cathepsin L, more weakly bromelain and cathepsin B while it is completely ineffective against cathepsin H. The chain is Clitocypin-4/-3 (clt4) from Clitocybe nebularis (Clouded agaric).